A 479-amino-acid polypeptide reads, in one-letter code: Calcium/calmodulin-dependent protein kinase type II delta chain (479 aa).

The Protein kinase domain occupies 14 to 272 (YQLFEELGKG…ASEALKHPWI (259 aa)). ATP contacts are provided by residues 20-28 (LGKGAFSVV) and Lys43. Catalysis depends on Asp136, which acts as the Proton acceptor. Thr287 carries the post-translational modification Phosphothreonine. Ser315 and Ser319 each carry phosphoserine. Thr337 bears the Phosphothreonine mark.

Belongs to the protein kinase superfamily. CAMK Ser/Thr protein kinase family. CaMK subfamily. CAMK2 is composed of four different chains: alpha, beta, gamma, and delta. The different isoforms assemble into homo- or heteromultimeric holoenzymes composed of 8 to 12 subunits.

The enzyme catalyses L-seryl-[protein] + ATP = O-phospho-L-seryl-[protein] + ADP + H(+). It catalyses the reaction L-threonyl-[protein] + ATP = O-phospho-L-threonyl-[protein] + ADP + H(+). Autophosphorylation of CAMK2 plays an important role in the regulation of the kinase activity. In terms of biological role, caM-kinase II (CAMK2) is a prominent kinase in the central nervous system. The protein is Calcium/calmodulin-dependent protein kinase type II delta chain (CAMK2D) of Gallus gallus (Chicken).